A 554-amino-acid polypeptide reads, in one-letter code: CTP synthase (554 aa).

Positions 1 to 265 are amidoligase domain; sequence MTPLIFVTGG…DELVIEQFKL (265 aa). Serine 13 lines the CTP pocket. Serine 13 provides a ligand contact to UTP. ATP-binding positions include 14 to 19 and aspartate 71; that span reads SLGKGI. Mg(2+)-binding residues include aspartate 71 and glutamate 139. Residues 146–148, 186–191, and lysine 222 each bind CTP; these read DIE and KTKPTQ. UTP is bound by residues 186–191 and lysine 222; that span reads KTKPTQ. In terms of domain architecture, Glutamine amidotransferase type-1 spans 292–545; it reads NIAVVGKYVD…VRAAREKKAG (254 aa). Residue glycine 353 participates in L-glutamine binding. Cysteine 380 (nucleophile; for glutamine hydrolysis) is an active-site residue. L-glutamine is bound by residues 381 to 384, glutamate 404, and arginine 471; that span reads YGMQ. Active-site residues include histidine 518 and glutamate 520.

This sequence belongs to the CTP synthase family. Homotetramer.

The catalysed reaction is UTP + L-glutamine + ATP + H2O = CTP + L-glutamate + ADP + phosphate + 2 H(+). It carries out the reaction L-glutamine + H2O = L-glutamate + NH4(+). It catalyses the reaction UTP + NH4(+) + ATP = CTP + ADP + phosphate + 2 H(+). It participates in pyrimidine metabolism; CTP biosynthesis via de novo pathway; CTP from UDP: step 2/2. Its activity is regulated as follows. Allosterically activated by GTP, when glutamine is the substrate; GTP has no effect on the reaction when ammonia is the substrate. The allosteric effector GTP functions by stabilizing the protein conformation that binds the tetrahedral intermediate(s) formed during glutamine hydrolysis. Inhibited by the product CTP, via allosteric rather than competitive inhibition. In terms of biological role, catalyzes the ATP-dependent amination of UTP to CTP with either L-glutamine or ammonia as the source of nitrogen. Regulates intracellular CTP levels through interactions with the four ribonucleotide triphosphates. The sequence is that of CTP synthase from Xanthomonas euvesicatoria pv. vesicatoria (strain 85-10) (Xanthomonas campestris pv. vesicatoria).